The primary structure comprises 334 residues: Holliday junction branch migration complex subunit RuvB (334 aa).

Residues 1-182 are large ATPase domain (RuvB-L); sequence MDERLVSTEA…FGVHARLEYY (182 aa). ATP contacts are provided by residues L21, R22, G63, K66, T67, T68, 129–131, R172, Y182, and R219; that span reads EDF. T67 provides a ligand contact to Mg(2+). Residues 183 to 253 form a small ATPAse domain (RuvB-S) region; it reads EQRDLAHIVS…IAEDALERLQ (71 aa). Residues 256-334 are head domain (RuvB-H); that stretch reads KLGLDHIDHK…HFQMEVPIRD (79 aa). Residues R311 and R316 each coordinate DNA.

It belongs to the RuvB family. Homohexamer. Forms an RuvA(8)-RuvB(12)-Holliday junction (HJ) complex. HJ DNA is sandwiched between 2 RuvA tetramers; dsDNA enters through RuvA and exits via RuvB. An RuvB hexamer assembles on each DNA strand where it exits the tetramer. Each RuvB hexamer is contacted by two RuvA subunits (via domain III) on 2 adjacent RuvB subunits; this complex drives branch migration. In the full resolvosome a probable DNA-RuvA(4)-RuvB(12)-RuvC(2) complex forms which resolves the HJ.

The protein localises to the cytoplasm. It catalyses the reaction ATP + H2O = ADP + phosphate + H(+). Functionally, the RuvA-RuvB-RuvC complex processes Holliday junction (HJ) DNA during genetic recombination and DNA repair, while the RuvA-RuvB complex plays an important role in the rescue of blocked DNA replication forks via replication fork reversal (RFR). RuvA specifically binds to HJ cruciform DNA, conferring on it an open structure. The RuvB hexamer acts as an ATP-dependent pump, pulling dsDNA into and through the RuvAB complex. RuvB forms 2 homohexamers on either side of HJ DNA bound by 1 or 2 RuvA tetramers; 4 subunits per hexamer contact DNA at a time. Coordinated motions by a converter formed by DNA-disengaged RuvB subunits stimulates ATP hydrolysis and nucleotide exchange. Immobilization of the converter enables RuvB to convert the ATP-contained energy into a lever motion, pulling 2 nucleotides of DNA out of the RuvA tetramer per ATP hydrolyzed, thus driving DNA branch migration. The RuvB motors rotate together with the DNA substrate, which together with the progressing nucleotide cycle form the mechanistic basis for DNA recombination by continuous HJ branch migration. Branch migration allows RuvC to scan DNA until it finds its consensus sequence, where it cleaves and resolves cruciform DNA. The sequence is that of Holliday junction branch migration complex subunit RuvB from Bacillus pumilus (strain SAFR-032).